A 766-amino-acid chain; its full sequence is 1,4-alpha-glucan branching enzyme GlgB (766 aa).

Asp-431 serves as the catalytic Nucleophile. Residue Glu-484 is the Proton donor of the active site.

It belongs to the glycosyl hydrolase 13 family. GlgB subfamily. As to quaternary structure, monomer.

The catalysed reaction is Transfers a segment of a (1-&gt;4)-alpha-D-glucan chain to a primary hydroxy group in a similar glucan chain.. The protein operates within glycan biosynthesis; glycogen biosynthesis. Functionally, catalyzes the formation of the alpha-1,6-glucosidic linkages in glycogen by scission of a 1,4-alpha-linked oligosaccharide from growing alpha-1,4-glucan chains and the subsequent attachment of the oligosaccharide to the alpha-1,6 position. The sequence is that of 1,4-alpha-glucan branching enzyme GlgB from Thermosynechococcus vestitus (strain NIES-2133 / IAM M-273 / BP-1).